The sequence spans 280 residues: Probable inactive shikimate kinase like 1, chloroplastic (280 aa).

Residues 1-54 (MEIFSASASLTLTGFVPRLLPLLSPQARTTLCKPLLSSSSTRLISCHSRIAPSR) constitute a chloroplast transit peptide.

It belongs to the shikimate kinase family.

The protein localises to the plastid. The protein resides in the chloroplast. Required for chloroplast biogenesis. The chain is Probable inactive shikimate kinase like 1, chloroplastic (SKL1) from Arabidopsis thaliana (Mouse-ear cress).